Consider the following 167-residue polypeptide: MYPATTPYETASGVGVAPVAGLFPVAGEAREWSSRLLDCFDDFDICCMTFWCPCITFGRTAEIVDHGMTSCGTSAALFALIQWLSGSQCTWAFSCTYRTRLRAQHGLPEAPCADFLVHLCCLHCALCQEYRELKARGYEPVLGWEFNAQRAAAGVAMCPPASQGMGR.

A helical membrane pass occupies residues 67–84 (GMTSCGTSAALFALIQWL).

It belongs to the cornifelin family. As to expression, expressed only in pollen.

It localises to the membrane. In Zea mays (Maize), this protein is Cell number regulator 3 (CNR3).